Here is a 157-residue protein sequence, read N- to C-terminus: Universal stress protein Sll1654 (157 aa).

This sequence belongs to the universal stress protein A family.

The polypeptide is Universal stress protein Sll1654 (Synechocystis sp. (strain ATCC 27184 / PCC 6803 / Kazusa)).